The sequence spans 423 residues: D-tagatose-1,6-bisphosphate aldolase subunit GatZ (423 aa).

Belongs to the GatZ/KbaZ family. GatZ subfamily. Forms a complex with GatY.

It functions in the pathway carbohydrate metabolism; D-tagatose 6-phosphate degradation; D-glyceraldehyde 3-phosphate and glycerone phosphate from D-tagatose 6-phosphate: step 2/2. Its function is as follows. Component of the tagatose-1,6-bisphosphate aldolase GatYZ that is required for full activity and stability of the Y subunit. Could have a chaperone-like function for the proper and stable folding of GatY. When expressed alone, GatZ does not show any aldolase activity. Is involved in the catabolism of galactitol. This Salmonella enteritidis PT4 (strain P125109) protein is D-tagatose-1,6-bisphosphate aldolase subunit GatZ.